The chain runs to 136 residues: Classical arabinogalactan protein 11 (136 aa).

Positions 1–20 (MARLFVVVALLALAVGTVFA) are cleaved as a signal peptide. Composition is skewed to low complexity over residues 24–56 (PSAA…ASSP), 68–81 (SAAS…APTV), and 89–107 (PEAD…PAAA). Residues 24–115 (PSAAPTASPT…AAESPKSGAT (92 aa)) are disordered. Ser112 is lipidated: GPI-anchor amidated serine. The propeptide at 113–136 (GATTNVKLSIAGTVAAAGFFIFSL) is removed in mature form.

It belongs to the classical AGP family. In terms of processing, O-glycosylated on the hydroxyproline residues.

It is found in the cell membrane. Its function is as follows. Proteoglycan that seems to be implicated in diverse developmental roles such as differentiation, cell-cell recognition, embryogenesis and programmed cell death. This chain is Classical arabinogalactan protein 11 (AGP11), found in Arabidopsis thaliana (Mouse-ear cress).